Reading from the N-terminus, the 28-residue chain is uncharacterized protein (28 aa).

This is an uncharacterized protein from Spiroplasma virus 4 (SpV4).